The primary structure comprises 723 residues: Fatty acid oxidation complex subunit alpha (723 aa).

Residues 1–189 (MIYQAKTLQV…KVGLLDAIVD (189 aa)) form an enoyl-CoA hydratase/isomerase region. Asp296 contacts substrate. A 3-hydroxyacyl-CoA dehydrogenase region spans residues 311–723 (SQDTQHAAVL…FYSAQQVSAL (413 aa)). Residues Met325, Asp344, 401–403 (VVE), Lys408, and Ser430 each bind NAD(+). The active-site For 3-hydroxyacyl-CoA dehydrogenase activity is the His451. NAD(+) is bound at residue Asn454. Substrate contacts are provided by Asn501 and Tyr661.

This sequence in the N-terminal section; belongs to the enoyl-CoA hydratase/isomerase family. The protein in the C-terminal section; belongs to the 3-hydroxyacyl-CoA dehydrogenase family. As to quaternary structure, heterotetramer of two alpha chains (FadB) and two beta chains (FadA).

The catalysed reaction is a (3S)-3-hydroxyacyl-CoA + NAD(+) = a 3-oxoacyl-CoA + NADH + H(+). It catalyses the reaction a (3S)-3-hydroxyacyl-CoA = a (2E)-enoyl-CoA + H2O. The enzyme catalyses a 4-saturated-(3S)-3-hydroxyacyl-CoA = a (3E)-enoyl-CoA + H2O. It carries out the reaction (3S)-3-hydroxybutanoyl-CoA = (3R)-3-hydroxybutanoyl-CoA. The catalysed reaction is a (3Z)-enoyl-CoA = a 4-saturated (2E)-enoyl-CoA. It catalyses the reaction a (3E)-enoyl-CoA = a 4-saturated (2E)-enoyl-CoA. It participates in lipid metabolism; fatty acid beta-oxidation. Functionally, involved in the aerobic and anaerobic degradation of long-chain fatty acids via beta-oxidation cycle. Catalyzes the formation of 3-oxoacyl-CoA from enoyl-CoA via L-3-hydroxyacyl-CoA. It can also use D-3-hydroxyacyl-CoA and cis-3-enoyl-CoA as substrate. The polypeptide is Fatty acid oxidation complex subunit alpha (Vibrio cholerae serotype O1 (strain ATCC 39315 / El Tor Inaba N16961)).